The chain runs to 193 residues: Cysteine and glycine-rich protein 1 (193 aa).

One can recognise an LIM zinc-binding 1 domain in the interval Cys10–Cys61. The Nuclear localization signal motif lies at Lys64–Lys69. The residue at position 81 (Ser81) is a Phosphoserine. Lys84 is subject to N6-acetyllysine. A Glycyl lysine isopeptide (Lys-Gly) (interchain with G-Cter in SUMO2) cross-link involves residue Lys91. An N6-acetyllysine mark is found at Lys112, Lys131, Lys137, and Lys161. The LIM zinc-binding 2 domain occupies Cys119 to Cys170. The residue at position 192 (Ser192) is a Phosphoserine.

In terms of assembly, interacts with ASCC1; ASCC2 and TRIP4.

The protein resides in the nucleus. Could play a role in neuronal development. The sequence is that of Cysteine and glycine-rich protein 1 (CSRP1) from Homo sapiens (Human).